The following is a 142-amino-acid chain: Large-conductance mechanosensitive channel (142 aa).

Transmembrane regions (helical) follow at residues 10–30 (FAIK…AAFS) and 86–106 (GNFI…FLMV).

This sequence belongs to the MscL family. In terms of assembly, homopentamer.

It is found in the cell inner membrane. Functionally, channel that opens in response to stretch forces in the membrane lipid bilayer. May participate in the regulation of osmotic pressure changes within the cell. This Polaromonas naphthalenivorans (strain CJ2) protein is Large-conductance mechanosensitive channel.